We begin with the raw amino-acid sequence, 656 residues long: Putative cysteine-rich receptor-like protein kinase 32 (656 aa).

The N-terminal stretch at 1-23 is a signal peptide; it reads MCLQNLLSILCFVLAISFGYVSA. Gnk2-homologous domains are found at residues 24 to 126 and 134 to 238; these read QKCV…NSSF and PTMV…GSEY. Over 24 to 262 the chain is Extracellular; the sequence is QKCVDSMFFR…PDGKTISTGA (239 aa). 5 N-linked (GlcNAc...) asparagine glycosylation sites follow: asparagine 35, asparagine 52, asparagine 61, asparagine 103, and asparagine 123. The chain crosses the membrane as a helical span at residues 263-283; sequence IVAVVVSVVIFVVLLALVLVI. Over 284-656 the chain is Cytoplasmic; that stretch reads RKRRQSYKTL…SASITRVTPR (373 aa). In terms of domain architecture, Protein kinase spans 321–606; it reads FSRNNKLGKG…IFQMLTNSSI (286 aa). ATP is bound by residues 327-335 and lysine 349; that span reads LGKGGFGEV. Tyrosine 394 is modified (phosphotyrosine). Aspartate 454 serves as the catalytic Proton acceptor. Serine 458 carries the phosphoserine modification. At threonine 494 the chain carries Phosphothreonine. Tyrosine 502 carries the post-translational modification Phosphotyrosine.

The protein belongs to the protein kinase superfamily. Ser/Thr protein kinase family. CRK subfamily.

Its subcellular location is the membrane. The enzyme catalyses L-seryl-[protein] + ATP = O-phospho-L-seryl-[protein] + ADP + H(+). It carries out the reaction L-threonyl-[protein] + ATP = O-phospho-L-threonyl-[protein] + ADP + H(+). This chain is Putative cysteine-rich receptor-like protein kinase 32 (CRK32), found in Arabidopsis thaliana (Mouse-ear cress).